An 888-amino-acid polypeptide reads, in one-letter code: Glutamate receptor 3 (888 aa).

The N-terminal stretch at 1–22 (MGQSVLRAVFFLVLGLLGHSHG) is a signal peptide. At 23 to 546 (GFPNTISIGG…GVFSFLDPLA (524 aa)) the chain is on the extracellular side. N-linked (GlcNAc...) asparagine glycosylation is found at Asn-57, Asn-260, Asn-374, Asn-409, and Asn-416. Cysteines 85 and 334 form a disulfide. L-glutamate-binding residues include Pro-502, Thr-504, and Arg-509. The chain crosses the membrane as a helical span at residues 547 to 567 (YEIWMCIVFAYIGVSVVLFLV). The Cytoplasmic segment spans residues 568 to 596 (SRFSPYEWHLEDNNEEPRDPQSPPDPPNE). Positions 597-612 (FGIFNSLWFSLGAFMQ) form an intramembrane region, helical; Pore-forming. The stretch at 613–615 (QGC) is an intramembrane region. The S-palmitoyl cysteine moiety is linked to residue Cys-615. Residues 616 to 621 (DISPRS) are Cytoplasmic-facing. The helical transmembrane segment at 622–642 (LSGRIVGGVWWFFTLIIISSY) threads the bilayer. Over 643–817 (TANLAAFLTV…DKTSALSLSN (175 aa)) the chain is Extracellular. L-glutamate-binding residues include Ser-680, Thr-681, and Glu-731. A disulfide bridge links Cys-744 with Cys-799. The helical transmembrane segment at 818-838 (VAGVFYILVGGLGLAMMVALI) threads the bilayer. The Cytoplasmic segment spans residues 839-888 (EFCYKSRAESKRMKLTKNTQNFKPAPATNTQNYATYREGYNVYGTESVKI). A lipid anchor (S-palmitoyl cysteine) is attached at Cys-841. Phosphotyrosine occurs at positions 871 and 881.

This sequence belongs to the glutamate-gated ion channel (TC 1.A.10.1) family. GRIA3 subfamily. As to quaternary structure, homotetramer or heterotetramer of pore-forming glutamate receptor subunits. Tetramers may be formed by the dimerization of dimers. Interacts with PICK1, GRIP1 and GRIP2. Found in a complex with GRIA1, GRIA2, GRIA4, CNIH2, CNIH3, CACNG2, CACNG3, CACNG4, CACNG5, CACNG7 and CACNG8. Interacts with CACNG5. Found in a complex with GRIA1, GRIA2, GRIA4, DLG4, CACNG8 and CNIH2.

Its subcellular location is the cell membrane. The protein resides in the postsynaptic cell membrane. It is found in the postsynaptic density membrane. It carries out the reaction Ca(2+)(in) = Ca(2+)(out). Ionotropic glutamate receptor that functions as a ligand-gated cation channel, gated by L-glutamate and glutamatergic agonists such as alpha-amino-3-hydroxy-5-methyl-4-isoxazolepropionic acid (AMPA), quisqualic acid, and kainic acid. L-glutamate acts as an excitatory neurotransmitter at many synapses in the central nervous system and plays an important role in fast excitatory synaptic transmission by inducing long-term potentiation. Binding of the excitatory neurotransmitter L-glutamate induces a conformation change, leading to the opening of the cation channel, and thereby converts the chemical signal to an electrical impulse upon entry of calcium. The receptor then desensitizes rapidly and enters a transient inactive state, characterized by the presence of bound agonist. In the presence of CACNG8, shows resensitization which is characterized by a delayed accumulation of current flux upon continued application of glutamate. In Mus musculus (Mouse), this protein is Glutamate receptor 3.